A 527-amino-acid polypeptide reads, in one-letter code: Bromodomain-containing protein 9 (527 aa).

Residues 1-16 (MNVSVTKRRKKKKKKK) show a composition bias toward basic residues. The segment at 1 to 54 (MNVSVTKRRKKKKKKKSEKEKDKYLDEDERRRRKEEKKRKREKEQCDSEGETEV) is disordered. A compositionally biased stretch (basic and acidic residues) spans 17–30 (SEKEKDKYLDEDER). Basic residues predominate over residues 31–41 (RRRKEEKKRKR). The region spanning 78-182 (NESTPLQQLL…HTGFKMMSKA (105 aa)) is the Bromo domain. A histone H4K5ac H4K8ac and histone H4K5bu H4K8bu binding region spans residues 156–158 (TYN). A compositionally biased stretch (basic and acidic residues) spans 468–478 (DFHDVHNDRGG). The disordered stretch occupies residues 468 to 527 (DFHDVHNDRGGSRPSSSSSMSNNSERDHHLGSPSRISVGEQQDIHDPYEFLQSPETDNQN). The span at 479 to 490 (SRPSSSSSMSNN) shows a compositional bias: low complexity.

Binds acetylated histones H3 and H4. Binds butyrylated histone H4.

The protein localises to the nucleus. Plays a role in chromatin remodeling and regulation of transcription. Acts as a chromatin reader that recognizes and binds acylated histones: binds histones that are acetylated and/or butyrylated. This Xenopus laevis (African clawed frog) protein is Bromodomain-containing protein 9 (brd9).